The chain runs to 789 residues: Homocitrate dehydratase, mitochondrial (789 aa).

A mitochondrion-targeting transit peptide spans 1–14 (MLSSANRFYIKRHL). Residues Gln96 and 189–191 (DSH) contribute to the substrate site. Positions 385, 448, and 451 each coordinate [4Fe-4S] cluster. Residues Arg476, Arg481, Lys610, and 672 to 673 (AR) contribute to the substrate site.

The protein belongs to the aconitase/IPM isomerase family. Requires [4Fe-4S] cluster as cofactor.

Its subcellular location is the mitochondrion. It catalyses the reaction (2R)-homocitrate = cis-homoaconitate + H2O. Its pathway is amino-acid biosynthesis; L-lysine biosynthesis via AAA pathway; L-alpha-aminoadipate from 2-oxoglutarate: step 2/5. Catalyzes the reversible dehydration of (R)-homocitrate to cis-homoaconitate, a step in the alpha-aminoadipate pathway for lysine biosynthesis. The protein is Homocitrate dehydratase, mitochondrial (ACO2) of Saccharomyces cerevisiae (strain ATCC 204508 / S288c) (Baker's yeast).